The primary structure comprises 61 residues: Small ribosomal subunit protein uS14 (61 aa).

Zn(2+) contacts are provided by Cys-24, Cys-27, Cys-40, and Cys-43.

The protein belongs to the universal ribosomal protein uS14 family. Zinc-binding uS14 subfamily. Part of the 30S ribosomal subunit. Contacts proteins S3 and S10. Requires Zn(2+) as cofactor.

Binds 16S rRNA, required for the assembly of 30S particles and may also be responsible for determining the conformation of the 16S rRNA at the A site. This is Small ribosomal subunit protein uS14 from Elusimicrobium minutum (strain Pei191).